A 183-amino-acid polypeptide reads, in one-letter code: Adenylate kinase (183 aa).

12-17 (GAGKGT) contacts ATP. The tract at residues 32-61 (STGDLLRAEVSAGSALGQEAESVMNRGELV) is NMP. Residues Thr-33, Arg-38, 59–61 (ELV), 86–89 (GFPR), and Gln-93 each bind AMP. An LID region spans residues 127 to 133 (SRGRDDD). Arg-128 serves as a coordination point for ATP. The AMP site is built by Arg-130 and Arg-141. Gly-169 provides a ligand contact to ATP.

It belongs to the adenylate kinase family. In terms of assembly, monomer.

It is found in the cytoplasm. The catalysed reaction is AMP + ATP = 2 ADP. Its pathway is purine metabolism; AMP biosynthesis via salvage pathway; AMP from ADP: step 1/1. Functionally, catalyzes the reversible transfer of the terminal phosphate group between ATP and AMP. Plays an important role in cellular energy homeostasis and in adenine nucleotide metabolism. This chain is Adenylate kinase, found in Synechococcus sp. (strain CC9311).